A 1776-amino-acid polypeptide reads, in one-letter code: TOG array regulator of axonemal microtubules protein 1 (1776 aa).

2 TOG regions span residues 94 to 311 (EEET…RRLE) and 351 to 595 (PQEL…MPSS). 8 HEAT repeats span residues 175 to 212 (AFSL…RSSG), 214 to 246 (VLRT…PEDL), 250 to 288 (LDLT…RLGQ), 344 to 383 (NLKF…KFNP), 389 to 426 (ASLV…RLGE), 430 to 465 (QFLG…MKEV), 466 to 503 (GPQR…YPSE), and 505 to 542 (FDLP…SMGS). Disordered regions lie at residues 655–676 (KNKL…TSNS), 817–921 (ILPS…RGIN), 970–1000 (HSSL…DSPD), and 1062–1084 (TRLS…GFTR). Composition is skewed to polar residues over residues 826–836 (PRTSPKHTSPL), 845–855 (DNSISFSNSWP), and 871–892 (LANQ…TAVQ). Low complexity predominate over residues 988–1000 (SGSSSTSDVDSPD). The segment at 1259 to 1481 (DIALTEALRL…YIKESVKNLR (223 aa)) is TOG 3. HEAT repeat units follow at residues 1297 to 1334 (TKLH…YLKK) and 1338 to 1375 (QELD…NVTP). Residues 1493–1536 (ASAKGRRSHPGSVGNTRSSSVSRDAFSSSEREVTEVREVPRKSA) form a disordered region. Residues 1509–1520 (RSSSVSRDAFSS) are compositionally biased toward low complexity. Residues 1521 to 1533 (SEREVTEVREVPR) show a composition bias toward basic and acidic residues. Residues 1540–1776 (SLESAEYIKV…LLDVTVLSEL (237 aa)) are TOG 4. HEAT repeat units lie at residues 1541-1578 (LESA…NNQE), 1582-1619 (GNIV…LLRD), and 1623-1661 (PIIN…HVDN).

This sequence belongs to the Crescerin family. As to quaternary structure, interacts with ARMC9. Interacts with CCDC66, CEP104 and CSPP1.

It localises to the cell projection. The protein localises to the cilium. Its subcellular location is the cytoplasm. The protein resides in the cytoskeleton. It is found in the cilium axoneme. Involved in ciliogenesis. It is required for appropriate acetylation and polyglutamylation of ciliary microtubules, and regulation of cilium length. Interacts with microtubules and promotes microtubule polymerization via its HEAT repeat domains, especially those in TOG region 2 and 4. The chain is TOG array regulator of axonemal microtubules protein 1 (Togaram1) from Mus musculus (Mouse).